We begin with the raw amino-acid sequence, 392 residues long: Keratin, type I cuticular Ha4 (392 aa).

The interval 1–56 (MSCESCLPALSCRTSCSSRPCVPPSCHGCTLPGACNIPANVGNCNWFCEGSFNGNE) is head. In terms of domain architecture, IF rod spans 56 to 367 (EKETMQFLND…SLLESEDCNL (312 aa)). A coil 1A region spans residues 57–91 (KETMQFLNDRLASYMEKVRQLERENAELECRIQER). Positions 92-102 (NQQQDPLVCPA) are linker 1. Positions 103–203 (YQAYFRTIEE…HEEEVNTLRC (101 aa)) are coil 1B. Positions 204–219 (QLGDRLNVEVDAAPTV) are linker 12. Residues 220 to 363 (DLNRVLNETR…NTYRSLLESE (144 aa)) form a coil 2 region. The interval 364-392 (DCNLPCNPCATTNASGSCCGPCGSSKRCC) is tail.

This sequence belongs to the intermediate filament family. Expressed in the hair root in the hair shaft cuticle and cortex.

The protein is Keratin, type I cuticular Ha4 of Mus musculus (Mouse).